We begin with the raw amino-acid sequence, 245 residues long: Purine nucleoside phosphorylase (245 aa).

His8 lines the a purine D-ribonucleoside pocket. Phosphate contacts are provided by residues 24 to 28 (GDPGR), Arg46, and 89 to 92 (RAGS). 184 to 185 (ME) is an a purine D-ribonucleoside binding site. The active-site Proton donor is Asp207.

Belongs to the PNP/MTAP phosphorylase family. In terms of assembly, homohexamer; trimer of homodimers.

It carries out the reaction inosine + phosphate = alpha-D-ribose 1-phosphate + hypoxanthine. The catalysed reaction is guanosine + phosphate = alpha-D-ribose 1-phosphate + guanine. The enzyme catalyses 2'-deoxyguanosine + phosphate = 2-deoxy-alpha-D-ribose 1-phosphate + guanine. It catalyses the reaction 2'-deoxyinosine + phosphate = 2-deoxy-alpha-D-ribose 1-phosphate + hypoxanthine. It participates in purine metabolism; purine nucleoside salvage. As part of the purine salvage pathway, catalyzes the phosphorolytic breakdown of the N-glycosidic bond in the beta-(deoxy)ribonucleoside molecules, with the formation of the corresponding free purine bases and pentose-1-phosphate. Preferentially acts on inosine and guanosine, and to a lesser extent on 2'-deoxyinosine and 2'-deoxyguanosine. This chain is Purine nucleoside phosphorylase, found in Plasmodium vivax (strain Salvador I).